We begin with the raw amino-acid sequence, 175 residues long: Probable S-adenosyl-L-methionine-binding protein VirR (175 aa).

One can recognise a TsaA-like domain in the interval 35–165; sequence LFFVGKIRTP…DRSLSKPLAP (131 aa). S-adenosyl-L-methionine contacts are provided by residues 52 to 54, 90 to 91, arginine 114, threonine 124, and 145 to 148; these read PRQ, HE, and LDGT.

The protein belongs to the tRNA methyltransferase O family.

The protein is Probable S-adenosyl-L-methionine-binding protein VirR (virR) of Rhizobium radiobacter (Agrobacterium tumefaciens).